A 479-amino-acid polypeptide reads, in one-letter code: Odorant receptor coreceptor (479 aa).

Residues 1–43 (MMKMKQQGLVADLLPNIRVMKFFGHFVFNYYDDNSSKYLHKIF) are Cytoplasmic-facing. A helical transmembrane segment spans residues 44 to 64 (CCVNLFLLLLQFALCAVNLII). The Extracellular portion of the chain corresponds to 65 to 73 (ESADVDDLT). The helical transmembrane segment at 74 to 94 (ANTITLLFFTHSIVKIIYFAV) threads the bilayer. The Cytoplasmic portion of the chain corresponds to 95 to 133 (RSKYFYRTWAIWNNPNSHPLFAESNARYHAIALKKMRLL). The chain crosses the membrane as a helical span at residues 134–154 (LFLVGATTVLSAIAWTVLTFF). Residues 155–190 (EHPIRKLVDPVTNETTIIELPQLLLRSYYPFDASKG) lie on the Extracellular side of the membrane. N-linked (GlcNAc...) asparagine glycosylation occurs at Asn167. A helical transmembrane segment spans residues 191-211 (IMHVIVLIYQFYWVLFMLIDA). The Cytoplasmic portion of the chain corresponds to 212–350 (NSLDVLFCSW…IVRLVTAVGD (139 aa)). The segment at 261 to 280 (SAEHLRESENQPPPPVPPQG) is disordered. Residues 351-371 (AYGFALLLHMLTTTITLTLLA) traverse the membrane as a helical segment. Residues 372 to 383 (YQATKVNGVNVY) lie on the Extracellular side of the membrane. A helical transmembrane segment spans residues 384 to 404 (AASTIGYIIYTFGQVFLFCIF). At 405-455 (GNRLIEESTSVMEAAYSCHWYDGSEEAKTFVQIVCQQCQKAMSISGAKFFT) the chain is on the cytoplasmic side. The chain crosses the membrane as a helical span at residues 456–476 (VSLDLFASVLGAVVTYFMVLV). Topologically, residues 477–479 (QLK) are extracellular.

This sequence belongs to the insect chemoreceptor superfamily. Heteromeric odorant receptor channel (TC 1.A.69) family. Orco subfamily. Heterodimer with conventional odorant receptors (ORs).

The protein resides in the cell membrane. Functionally, odorant coreceptor which complexes with conventional odorant receptors (ORs) to form odorant-sensing units, providing sensitive and prolonged odorant signaling and calcium permeability. Obligate coreceptor of all odorant receptors. Orco is a universal and integral part of the functional odorant receptor, involved in the dendritic localization of other olfactory receptors. Can form functional ion channels in the absence of an odor-binding odorant receptor. Plays a central role in the perception of olfactory stimuli in ants and is essential for ant social organization. Required for pheromone sensing and mating behavior. Also required for the development and maintenance of odorant receptor neurons (ORNs) and of antennal lobe glomeruli. This is Odorant receptor coreceptor from Harpegnathos saltator (Jerdon's jumping ant).